A 239-amino-acid polypeptide reads, in one-letter code: ATP synthase subunit b (239 aa).

Over residues 1 to 22 (MYAQEAQQKPEAQQSAPAAEQP) the composition is skewed to low complexity. The disordered stretch occupies residues 1 to 64 (MYAQEAQQKP…GEEEAGEHME (64 aa)). Composition is skewed to basic and acidic residues over residues 23–33 (KPAEEQAKPEQ) and 45–64 (ELSE…EHME). Residues 85–105 (SYWIAMAFNFAIVFALLGWAM) form a helical membrane-spanning segment.

The protein belongs to the ATPase B chain family. In terms of assembly, F-type ATPases have 2 components, F(1) - the catalytic core - and F(0) - the membrane proton channel. F(1) has five subunits: alpha(3), beta(3), gamma(1), delta(1), epsilon(1). F(0) has three main subunits: a(1), b(2) and c(10-14). The alpha and beta chains form an alternating ring which encloses part of the gamma chain. F(1) is attached to F(0) by a central stalk formed by the gamma and epsilon chains, while a peripheral stalk is formed by the delta and b chains.

Its subcellular location is the cell inner membrane. Its function is as follows. F(1)F(0) ATP synthase produces ATP from ADP in the presence of a proton or sodium gradient. F-type ATPases consist of two structural domains, F(1) containing the extramembraneous catalytic core and F(0) containing the membrane proton channel, linked together by a central stalk and a peripheral stalk. During catalysis, ATP synthesis in the catalytic domain of F(1) is coupled via a rotary mechanism of the central stalk subunits to proton translocation. Component of the F(0) channel, it forms part of the peripheral stalk, linking F(1) to F(0). This is ATP synthase subunit b from Koribacter versatilis (strain Ellin345).